We begin with the raw amino-acid sequence, 634 residues long: Protein IcfG (634 aa).

The region spanning 306–361 is the HAMP domain; the sequence is HHSTVPILDLTKASQAIAAGDLDYEININQGNRQDEIGILGNSFIYMKNQIKTLIA. Residues 385-633 enclose the PPM-type phosphatase domain; it reads PISLPDLQQW…DDITMIAVYR (249 aa).

Functionally, involved in cross-regulation of inorganic carbon and glucose metabolisms. This Synechocystis sp. (strain ATCC 27184 / PCC 6803 / Kazusa) protein is Protein IcfG (icfG).